Reading from the N-terminus, the 1251-residue chain is Myosin-1 (1251 aa).

Positions 1-37 are disordered; sequence MGQSKRPFKNKEEKKSRGFGRSRHDDAGAGGRPQVKK. Positions 9–27 are enriched in basic and acidic residues; the sequence is KNKEEKKSRGFGRSRHDDA. Residues 48–727 enclose the Myosin motor domain; sequence IGVSDLTLLS…TLFALEHMRD (680 aa). 141 to 148 contributes to the ATP binding site; that stretch reads GESGAGKT. Ser369 is subject to Phosphoserine. An actin-binding region spans residues 416-498; that stretch reads TIGILDIYGF…PGVFAALNDA (83 aa). 2 IQ domains span residues 731–751 and 752–777; these read HNMA…RTEC and AIRI…QGHK. The region spanning 785–980 is the TH1 domain; the sequence is RRRYSLVGSR…PGEPANSVSK (196 aa). Disordered regions lie at residues 958–1093 and 1135–1227; these read RDDV…SNEL and AKTP…ASIA. A compositionally biased stretch (low complexity) spans 1040–1052; it reads VAQSVTAVAAAHA. A compositionally biased stretch (pro residues) spans 1061–1073; that stretch reads RPPPPPPPTQPPA. Residues 1074-1135 form the SH3 domain; the sequence is PKKDTAKALY…PEAYLEPIVA (62 aa). Over residues 1139 to 1148 the composition is skewed to pro residues; it reads SLPPPPPSLP. 2 stretches are compositionally biased toward polar residues: residues 1150–1161 and 1216–1225; these read QSKSAVSNTLPN and ATPSSLSNAS.

The protein belongs to the TRAFAC class myosin-kinesin ATPase superfamily. Myosin family. Phosphorylation of the TEDS site (Ser-369) is required for the polarization of the actin cytoskeleton. Phosphorylation probably activates the myosin-I ATPase activity.

It is found in the cytoplasm. The protein localises to the cytoskeleton. It localises to the actin patch. Type-I myosin implicated in the organization of the actin cytoskeleton. Required for proper actin cytoskeleton polarization. At the cell cortex, assembles in patch-like structures together with proteins from the actin-polymerizing machinery and promotes actin assembly. Functions as actin nucleation-promoting factor (NPF) for the Arp2/3 complex. This chain is Myosin-1 (MYO1), found in Coccidioides immitis (strain RS) (Valley fever fungus).